Reading from the N-terminus, the 650-residue chain is Probable basic-leucine zipper transcription factor K (650 aa).

The stretch at 37–180 (IDNNNNNYSN…KQQKQQQQEQ (144 aa)) forms a coiled coil. Disordered stretches follow at residues 109–130 (IPQQQQQEQDQQEDQDQEQEQE) and 242–279 (TTLNTNLQSDNNNNNNNNNNNNNNNNNNNNNNNNNNNL). Residues 118–129 (DQQEDQDQEQEQ) are compositionally biased toward acidic residues. Polar residues predominate over residues 242–251 (TTLNTNLQSD). The segment covering 252 to 278 (NNNNNNNNNNNNNNNNNNNNNNNNNNN) has biased composition (low complexity). Residues 259 to 286 (NNNNNNNNNNNNNNNNNNNNLLNEKQIE) are a coiled coil. Positions 305–368 (FNKIEKGKRN…IEIMRSEPES (64 aa)) constitute a bZIP domain. The segment at 307–327 (KIEKGKRNQTESSKNFRERKK) is basic motif. Positions 330–337 (IKDIELKL) are leucine-zipper. A compositionally biased stretch (low complexity) spans 452–466 (NNNNNNNNNNNNNNN). Positions 452-473 (NNNNNNNNNNNNNNNDNDDDNE) are disordered.

It belongs to the bZIP family.

The protein resides in the nucleus. Its function is as follows. Probable transcriptional regulator. This is Probable basic-leucine zipper transcription factor K (bzpK) from Dictyostelium discoideum (Social amoeba).